We begin with the raw amino-acid sequence, 543 residues long: Zinc finger protein 852 (543 aa).

Positions 8 to 82 (VAYEDLSEDY…TSGGLFGVVP (75 aa)) constitute a KRAB domain. Residue Ser145 is modified to Phosphoserine. 12 consecutive C2H2-type zinc fingers follow at residues 159 to 181 (YRCD…RRIH), 187 to 209 (YECN…LRTH), 215 to 237 (YECS…QRLH), 243 to 265 (YKCN…QRTH), 271 to 293 (YECK…QFLH), 299 to 321 (YKCN…QRTH), 327 to 349 (YKCN…QSLH), 355 to 377 (YKCS…ERIH), 383 to 405 (FKCS…QRLH), 411 to 433 (YKCN…QRIH), 439 to 461 (YECN…QRTH), and 467 to 489 (YKCN…QRVH).

It belongs to the krueppel C2H2-type zinc-finger protein family.

The protein localises to the nucleus. Functionally, may be involved in transcriptional regulation. This chain is Zinc finger protein 852 (ZNF852), found in Homo sapiens (Human).